A 125-amino-acid chain; its full sequence is Small ribosomal subunit protein eS8 (125 aa).

Belongs to the eukaryotic ribosomal protein eS8 family. Part of the 30S ribosomal subunit.

In Methanocella arvoryzae (strain DSM 22066 / NBRC 105507 / MRE50), this protein is Small ribosomal subunit protein eS8.